The chain runs to 205 residues: Outer-membrane lipoprotein LolB (205 aa).

The signal sequence occupies residues 1-17 (MFLRHVIVFSLIALLTG). Cys-18 carries N-palmitoyl cysteine lipidation. Cys-18 carries S-diacylglycerol cysteine lipidation.

This sequence belongs to the LolB family. Monomer.

Its subcellular location is the cell outer membrane. Its function is as follows. Plays a critical role in the incorporation of lipoproteins in the outer membrane after they are released by the LolA protein. This chain is Outer-membrane lipoprotein LolB, found in Pseudomonas syringae pv. syringae (strain B728a).